We begin with the raw amino-acid sequence, 514 residues long: 2-isopropylmalate synthase (514 aa).

One can recognise a Pyruvate carboxyltransferase domain in the interval 8-270 (IRIFDTTLRD…DCGVVTEQLF (263 aa)). Mn(2+)-binding residues include D17, H205, H207, and N241. Residues 394–514 (RLVNLSVQCS…KEEEQEKEGI (121 aa)) form a regulatory domain region.

It belongs to the alpha-IPM synthase/homocitrate synthase family. LeuA type 1 subfamily. As to quaternary structure, homodimer. Mn(2+) is required as a cofactor.

It localises to the cytoplasm. It carries out the reaction 3-methyl-2-oxobutanoate + acetyl-CoA + H2O = (2S)-2-isopropylmalate + CoA + H(+). It participates in amino-acid biosynthesis; L-leucine biosynthesis; L-leucine from 3-methyl-2-oxobutanoate: step 1/4. Catalyzes the condensation of the acetyl group of acetyl-CoA with 3-methyl-2-oxobutanoate (2-ketoisovalerate) to form 3-carboxy-3-hydroxy-4-methylpentanoate (2-isopropylmalate). This chain is 2-isopropylmalate synthase, found in Nitratidesulfovibrio vulgaris (strain DSM 19637 / Miyazaki F) (Desulfovibrio vulgaris).